Here is a 134-residue protein sequence, read N- to C-terminus: Syncollin (134 aa).

An N-terminal signal peptide occupies residues 1–21; it reads MSPLCLLLLALALVAVPGARG.

Monomer and homooligomer; most probably hexameric. Interacts with GP2. According to PubMed:10753942 interaction with syntaxins shown in PubMed:9244306 is physiologically questionable. Post-translationally, contains intrachain disulfide bonds. In terms of tissue distribution, specifically expressed in pancreas and also detected in secretory granules of parotid gland (at protein level). Expressed in pancreas, spleen, small intestine, lung and neutrophilic granulocytes (at protein level). Expressed by epithelial cells in duodenum and colon.

It localises to the zymogen granule membrane. The protein resides in the zymogen granule lumen. In terms of biological role, functions in exocytosis in pancreatic acinar cells regulating the fusion of zymogen granules with each other. May have a pore-forming activity on membranes and regulate exocytosis in other exocrine tissues. This Rattus norvegicus (Rat) protein is Syncollin (Sycn).